Here is a 134-residue protein sequence, read N- to C-terminus: T-cell receptor beta chain V region CTL-F3 (134 aa).

A signal peptide spans 1-19; that stretch reads MAPRLLFCLVLCFLRAEPT. A v segment region spans residues 20-115; sequence NAGVIQTPRH…SAVYLCASSL (96 aa). Cysteine 42 and cysteine 111 are disulfide-bonded. Asparagine 90 carries N-linked (GlcNAc...) asparagine glycosylation. The d segment stretch occupies residues 116-119; it reads STGV. The tract at residues 120–134 is j segment; it reads SYEQYFGPGTRLTVL.

The polypeptide is T-cell receptor beta chain V region CTL-F3 (Mus musculus (Mouse)).